The following is a 173-amino-acid chain: Large ribosomal subunit protein bL9 (173 aa).

This sequence belongs to the bacterial ribosomal protein bL9 family.

Binds to the 23S rRNA. The polypeptide is Large ribosomal subunit protein bL9 (Rickettsia bellii (strain OSU 85-389)).